The sequence spans 210 residues: Redox-sensing transcriptional repressor Rex (210 aa).

The segment at residues 17–56 is a DNA-binding region (H-T-H motif); it reads KYHRYLGNLMRNDVDRISSKELSEKIGFTASQIRQDLNCF. An NAD(+)-binding site is contributed by 91 to 96; that stretch reads GAGNIG.

The protein belongs to the transcriptional regulatory Rex family. Homodimer.

Its subcellular location is the cytoplasm. Functionally, modulates transcription in response to changes in cellular NADH/NAD(+) redox state. The protein is Redox-sensing transcriptional repressor Rex of Clostridium kluyveri (strain ATCC 8527 / DSM 555 / NBRC 12016 / NCIMB 10680 / K1).